A 358-amino-acid chain; its full sequence is 3-isopropylmalate dehydrogenase (358 aa).

An NAD(+)-binding site is contributed by 77 to 90 (GEKWDSLPRELRPE). Substrate is bound by residues Arg97, Arg107, Arg135, and Asp220. Mg(2+) contacts are provided by Asp220, Asp244, and Asp248. 277–289 (GSAPDIAGQGIAN) contributes to the NAD(+) binding site.

This sequence belongs to the isocitrate and isopropylmalate dehydrogenases family. LeuB type 1 subfamily. In terms of assembly, homodimer. Mg(2+) is required as a cofactor. Requires Mn(2+) as cofactor.

The protein resides in the cytoplasm. It carries out the reaction (2R,3S)-3-isopropylmalate + NAD(+) = 4-methyl-2-oxopentanoate + CO2 + NADH. It participates in amino-acid biosynthesis; L-leucine biosynthesis; L-leucine from 3-methyl-2-oxobutanoate: step 3/4. Functionally, catalyzes the oxidation of 3-carboxy-2-hydroxy-4-methylpentanoate (3-isopropylmalate) to 3-carboxy-4-methyl-2-oxopentanoate. The product decarboxylates to 4-methyl-2 oxopentanoate. This chain is 3-isopropylmalate dehydrogenase, found in Wolinella succinogenes (strain ATCC 29543 / DSM 1740 / CCUG 13145 / JCM 31913 / LMG 7466 / NCTC 11488 / FDC 602W) (Vibrio succinogenes).